We begin with the raw amino-acid sequence, 370 residues long: Anhydro-N-acetylmuramic acid kinase (370 aa).

Gly13–Asp20 serves as a coordination point for ATP.

It belongs to the anhydro-N-acetylmuramic acid kinase family.

The enzyme catalyses 1,6-anhydro-N-acetyl-beta-muramate + ATP + H2O = N-acetyl-D-muramate 6-phosphate + ADP + H(+). It participates in amino-sugar metabolism; 1,6-anhydro-N-acetylmuramate degradation. The protein operates within cell wall biogenesis; peptidoglycan recycling. Functionally, catalyzes the specific phosphorylation of 1,6-anhydro-N-acetylmuramic acid (anhMurNAc) with the simultaneous cleavage of the 1,6-anhydro ring, generating MurNAc-6-P. Is required for the utilization of anhMurNAc either imported from the medium or derived from its own cell wall murein, and thus plays a role in cell wall recycling. The polypeptide is Anhydro-N-acetylmuramic acid kinase (Vibrio vulnificus (strain CMCP6)).